Here is a 63-residue protein sequence, read N- to C-terminus: MKAQDLREKSVEELNAELMNLLREQFNLRMQAATGQLQQTHTLKAVRRDIARVKTVLTEKAGA.

The protein belongs to the universal ribosomal protein uL29 family.

The sequence is that of Large ribosomal subunit protein uL29 from Vibrio parahaemolyticus serotype O3:K6 (strain RIMD 2210633).